A 308-amino-acid chain; its full sequence is tRNA dimethylallyltransferase (308 aa).

14–21 provides a ligand contact to ATP; it reads GPTASGKT. 16 to 21 lines the substrate pocket; it reads TASGKT. Interaction with substrate tRNA regions lie at residues 39 to 42, 163 to 167, and 244 to 249; these read DSAL, QRLSR, and RCVGYR.

The protein belongs to the IPP transferase family. In terms of assembly, monomer. Requires Mg(2+) as cofactor.

It carries out the reaction adenosine(37) in tRNA + dimethylallyl diphosphate = N(6)-dimethylallyladenosine(37) in tRNA + diphosphate. Its function is as follows. Catalyzes the transfer of a dimethylallyl group onto the adenine at position 37 in tRNAs that read codons beginning with uridine, leading to the formation of N6-(dimethylallyl)adenosine (i(6)A). The polypeptide is tRNA dimethylallyltransferase (Shewanella oneidensis (strain ATCC 700550 / JCM 31522 / CIP 106686 / LMG 19005 / NCIMB 14063 / MR-1)).